A 1072-amino-acid polypeptide reads, in one-letter code: DNA-directed RNA polymerase subunit beta (1072 aa).

This sequence belongs to the RNA polymerase beta chain family. In plastids the minimal PEP RNA polymerase catalytic core is composed of four subunits: alpha, beta, beta', and beta''. When a (nuclear-encoded) sigma factor is associated with the core the holoenzyme is formed, which can initiate transcription.

It is found in the plastid. The protein resides in the chloroplast. The catalysed reaction is RNA(n) + a ribonucleoside 5'-triphosphate = RNA(n+1) + diphosphate. Functionally, DNA-dependent RNA polymerase catalyzes the transcription of DNA into RNA using the four ribonucleoside triphosphates as substrates. This is DNA-directed RNA polymerase subunit beta from Arabidopsis thaliana (Mouse-ear cress).